Here is a 513-residue protein sequence, read N- to C-terminus: Putative thymidine phosphorylase 2 (513 aa).

It belongs to the thymidine/pyrimidine-nucleoside phosphorylase family. Type 2 subfamily.

It carries out the reaction thymidine + phosphate = 2-deoxy-alpha-D-ribose 1-phosphate + thymine. This chain is Putative thymidine phosphorylase 2, found in Acidovorax sp. (strain JS42).